The chain runs to 255 residues: uncharacterized protein (255 aa).

Positions 253–255 match the Microbody targeting signal motif; it reads SKI.

The protein belongs to the enoyl-CoA hydratase/isomerase family.

It localises to the peroxisome. This is an uncharacterized protein from Caenorhabditis elegans.